Reading from the N-terminus, the 472-residue chain is Protein c-ets-2-B (472 aa).

The 86-residue stretch at 85 to 170 (DTFNGFAKER…EHLEEMMKEY (86 aa)) folds into the PNT domain. A DNA-binding region (ETS) is located at residues 366–446 (IQLWQFLLEL…SGKRYVYRFV (81 aa)).

The protein belongs to the ETS family.

The protein localises to the nucleus. In terms of biological role, probable transcription factor. This chain is Protein c-ets-2-B (ets2-b), found in Xenopus laevis (African clawed frog).